Consider the following 254-residue polypeptide: RNA polymerase sigma-D factor (254 aa).

The Polymerase core binding signature appears at 54–67 (DLMSLGMLGLYDAL). The H-T-H motif DNA-binding region spans 220 to 239 (LTEIGQVLNLSTSRISQIHS).

In terms of assembly, monomer. Interacts transiently with the RNAP core.

Its function is as follows. Sigma factors are initiation factors that promote the attachment of RNA polymerase (RNAP) to specific initiation sites and are then released. This alternative sigma factor is required for the transcription of the flagellin and motility genes as well as for wild-type chemotaxis. Associates with the RNAP core during all growth phases with a peak at the transition to stationary phase. In Bacillus subtilis (strain 168), this protein is RNA polymerase sigma-D factor (sigD).